A 93-amino-acid polypeptide reads, in one-letter code: MKKTLMLLAMVVALVILPFFINHGGEYGGSDGEAESQIQAIAPQYKPWFQPLYEPASGEIESLLFTLQGSLGAAVIFYILGYCKGKQRRDDRA.

2 helical membrane-spanning segments follow: residues 5–25 (LMLL…NHGG) and 63–83 (LLFT…LGYC).

It belongs to the CbiN family. In terms of assembly, forms an energy-coupling factor (ECF) transporter complex composed of an ATP-binding protein (A component, CbiO), a transmembrane protein (T component, CbiQ) and 2 possible substrate-capture proteins (S components, CbiM and CbiN) of unknown stoichimetry.

It is found in the cell inner membrane. It functions in the pathway cofactor biosynthesis; adenosylcobalamin biosynthesis. Part of the energy-coupling factor (ECF) transporter complex CbiMNOQ involved in cobalt import. The chain is Cobalt transport protein CbiN from Salmonella agona (strain SL483).